Here is a 151-residue protein sequence, read N- to C-terminus: uncharacterized protein (151 aa).

Residues 122-151 (GVAQRQVPTTGTHSFFHCTSEGNKEKPHHF) are disordered.

This is an uncharacterized protein from Homo sapiens (Human).